A 517-amino-acid chain; its full sequence is Ribose import ATP-binding protein RbsA (517 aa).

ABC transporter domains follow at residues 11 to 251 (LEMR…VGRD) and 263 to 507 (YDPG…ALAT). Position 43-50 (43-50 (GENGAGKS)) interacts with ATP.

The protein belongs to the ABC transporter superfamily. Ribose importer (TC 3.A.1.2.1) family. In terms of assembly, the complex is composed of an ATP-binding protein (RbsA), two transmembrane proteins (RbsC) and a solute-binding protein (RbsB).

The protein resides in the cell inner membrane. The enzyme catalyses D-ribose(out) + ATP + H2O = D-ribose(in) + ADP + phosphate + H(+). In terms of biological role, part of the ABC transporter complex RbsABC involved in ribose import. Responsible for energy coupling to the transport system. This chain is Ribose import ATP-binding protein RbsA, found in Burkholderia pseudomallei (strain K96243).